The primary structure comprises 572 residues: Capsid vertex component 2 (572 aa).

Residues M1–R58 form an interaction with major capsid protein/MCP region.

This sequence belongs to the herpesviridae CVC2 protein family. Heterodimerizes with CVC1. Interacts with major capsid protein/MCP and triplex capsid protein 1/TRX1 at the pentamer vertices. Interacts with the large tegument protein/LTP.

Its subcellular location is the virion. It is found in the host nucleus. Functionally, capsid vertex-specific component that plays a role during viral DNA encapsidation, assuring correct genome cleavage and presumably stabilizing capsids that contain full-length viral genomes. Participates in the interaction between the capsid and the tegument through interaction with the large tegument protein/LTP. The polypeptide is Capsid vertex component 2 (Infectious laryngotracheitis virus (strain Thorne V882) (ILTV)).